A 209-amino-acid polypeptide reads, in one-letter code: Uracil phosphoribosyltransferase (209 aa).

5-phospho-alpha-D-ribose 1-diphosphate contacts are provided by residues R79, R104, and 131 to 139; that span reads DPMLATGHS. Uracil contacts are provided by residues I194 and 199–201; that span reads GDA. 5-phospho-alpha-D-ribose 1-diphosphate is bound at residue D200.

This sequence belongs to the UPRTase family. It depends on Mg(2+) as a cofactor.

It catalyses the reaction UMP + diphosphate = 5-phospho-alpha-D-ribose 1-diphosphate + uracil. Its pathway is pyrimidine metabolism; UMP biosynthesis via salvage pathway; UMP from uracil: step 1/1. With respect to regulation, allosterically activated by GTP. Its function is as follows. Catalyzes the conversion of uracil and 5-phospho-alpha-D-ribose 1-diphosphate (PRPP) to UMP and diphosphate. The chain is Uracil phosphoribosyltransferase from Caulobacter vibrioides (strain ATCC 19089 / CIP 103742 / CB 15) (Caulobacter crescentus).